We begin with the raw amino-acid sequence, 227 residues long: ATP synthase F(0) complex subunit a (227 aa).

Helical transmembrane passes span 14–34, 69–89, 99–119, 137–157, 180–200, and 202–222; these read LLGI…FPTP, WATI…LGLL, LSLN…IGML, LLIP…PLAL, FVLI…LFLL, and ILEV…LSLY.

Belongs to the ATPase A chain family. In terms of assembly, component of the ATP synthase complex composed at least of ATP5F1A/subunit alpha, ATP5F1B/subunit beta, ATP5MC1/subunit c (homooctomer), MT-ATP6/subunit a, MT-ATP8/subunit 8, ATP5ME/subunit e, ATP5MF/subunit f, ATP5MG/subunit g, ATP5MK/subunit k, ATP5MJ/subunit j, ATP5F1C/subunit gamma, ATP5F1D/subunit delta, ATP5F1E/subunit epsilon, ATP5PF/subunit F6, ATP5PB/subunit b, ATP5PD/subunit d, ATP5PO/subunit OSCP. ATP synthase complex consists of a soluble F(1) head domain (subunits alpha(3) and beta(3)) - the catalytic core - and a membrane F(0) domain - the membrane proton channel (subunits c, a, 8, e, f, g, k and j). These two domains are linked by a central stalk (subunits gamma, delta, and epsilon) rotating inside the F1 region and a stationary peripheral stalk (subunits F6, b, d, and OSCP). Interacts with DNAJC30; interaction is direct.

It localises to the mitochondrion inner membrane. It catalyses the reaction H(+)(in) = H(+)(out). Subunit a, of the mitochondrial membrane ATP synthase complex (F(1)F(0) ATP synthase or Complex V) that produces ATP from ADP in the presence of a proton gradient across the membrane which is generated by electron transport complexes of the respiratory chain. ATP synthase complex consist of a soluble F(1) head domain - the catalytic core - and a membrane F(1) domain - the membrane proton channel. These two domains are linked by a central stalk rotating inside the F(1) region and a stationary peripheral stalk. During catalysis, ATP synthesis in the catalytic domain of F(1) is coupled via a rotary mechanism of the central stalk subunits to proton translocation. With the subunit c (ATP5MC1), forms the proton-conducting channel in the F(0) domain, that contains two crucial half-channels (inlet and outlet) that facilitate proton movement from the mitochondrial intermembrane space (IMS) into the matrix. Protons are taken up via the inlet half-channel and released through the outlet half-channel, following a Grotthuss mechanism. The chain is ATP synthase F(0) complex subunit a from Squalus acanthias (Spiny dogfish).